Here is a 422-residue protein sequence, read N- to C-terminus: RNA exonuclease 4 (422 aa).

Residues 1-194 are disordered; the sequence is MGKAKVPASK…APAPPTEEDI (194 aa). A Phosphoserine modification is found at Ser15. Basic residues predominate over residues 26–40; it reads LTRKKNKKKKRFWKS. A phosphoserine mark is found at Ser96 and Ser111. Basic and acidic residues-rich tracts occupy residues 106-127 and 151-176; these read NKKETSPQVKGEEMPAGKDQEA and GTEHNKKGTKERTNGDIVPERGDIEH. Lys115 participates in a covalent cross-link: Glycyl lysine isopeptide (Lys-Gly) (interchain with G-Cter in SUMO2). An Exonuclease domain is found at 243–394; it reads ALALDCEMVG…QDAQAAMRLY (152 aa).

This sequence belongs to the REXO4 family. As to quaternary structure, can bind ESR1 and ESR2. This interaction is abrogated by estrogen and augmented by tamoxifen treatment.

The protein resides in the nucleus. The protein localises to the nucleolus. The chain is RNA exonuclease 4 (REXO4) from Homo sapiens (Human).